The following is a 383-amino-acid chain: uncharacterized protein (383 aa).

It belongs to the peptidase M20 family.

This is an uncharacterized protein from Staphylococcus aureus (strain N315).